A 357-amino-acid polypeptide reads, in one-letter code: Mating-type protein MAT-1 (357 aa).

A DNA-binding region (alpha box) is located at residues 53-108 (RAKRPLNAFMAFRTYYLKLFPDTQQKNASGFLTQLWGGDPHRNKWALIAKVYSFLR).

Belongs to the MATALPHA1 family.

It localises to the nucleus. Its function is as follows. Mating type proteins are sequence specific DNA-binding proteins that act as master switches in fungal differentiation by controlling gene expression in a cell type-specific fashion. Transcriptional activator that induces the transcription of alpha-specific genes. This chain is Mating-type protein MAT-1 (MAT1), found in Fusarium oxysporum (Fusarium vascular wilt).